The sequence spans 349 residues: Rhodopsin (349 aa).

At 1 to 33 (TEGPYFYIPMSNATGVVRSPYEYPQYYLVYPAA) the chain is on the extracellular side. N-linked (GlcNAc...) asparagine glycosylation occurs at N12. A helical membrane pass occupies residues 34–58 (FAVLGAYMFFLIIFGFPVNFLTLYV). Topologically, residues 59 to 70 (TIEHKKLRTPLN) are cytoplasmic. A helical membrane pass occupies residues 71-93 (YILLNLAVADLFMVIGGFTTTIY). Over 94 to 107 (TSMHGYFVLGRLGC) the chain is Extracellular. A disulfide bond links C107 and C184. A helical membrane pass occupies residues 108–130 (NLEGFSATLGGMISLWSLVVLAV). The 'Ionic lock' involved in activated form stabilization motif lies at 131–133 (ERW). The Cytoplasmic segment spans residues 131–149 (ERWVVVCKPMSNFRFGENH). A helical transmembrane segment spans residues 150–170 (AIMGVTLTWAMGLACTVPPLV). At 171 to 199 (GWSRYIPEGMQCSCGIDYYTRAEGFNNES) the chain is on the extracellular side. N197 carries an N-linked (GlcNAc...) asparagine glycan. A helical membrane pass occupies residues 200 to 221 (FVLYMFVCHFSFPLVVIFFCYG). The Cytoplasmic portion of the chain corresponds to 222 to 249 (RLLCAVKEAAAAQQESETTQRAEREVTR). A helical transmembrane segment spans residues 250-271 (MVILMVIGFLVCWLPYASVAWY). Residues 272-283 (IFTHQGSEFGPL) are Extracellular-facing. A helical transmembrane segment spans residues 284–305 (FMTIPAFFAKSSAIYNPVIYIC). The residue at position 293 (K293) is an N6-(retinylidene)lysine. Topologically, residues 306 to 349 (LNKQFRQCMLTTLFCGKNPFEEEEGASSTKTEASSASSSSVSPA) are cytoplasmic. C320 carries the S-palmitoyl cysteine lipid modification. The tract at residues 326 to 349 (EEEEGASSTKTEASSASSSSVSPA) is disordered. Positions 331-349 (ASSTKTEASSASSSSVSPA) are enriched in low complexity.

This sequence belongs to the G-protein coupled receptor 1 family. Opsin subfamily. Post-translationally, phosphorylated on some or all of the serine and threonine residues present in the C-terminal region. In terms of processing, contains one covalently linked retinal chromophore.

It localises to the membrane. The protein resides in the cell projection. It is found in the cilium. Its subcellular location is the photoreceptor outer segment. In terms of biological role, photoreceptor required for image-forming vision at low light intensity. While most salt water fish species use retinal as chromophore, most freshwater fish use 3-dehydroretinal, or a mixture of retinal and 3-dehydroretinal. Light-induced isomerization of 11-cis to all-trans retinal triggers a conformational change that activates signaling via G-proteins. Subsequent receptor phosphorylation mediates displacement of the bound G-protein alpha subunit by arrestin and terminates signaling. This chain is Rhodopsin (rho), found in Myripristis berndti (Bigscale soldierfish).